The sequence spans 151 residues: Ubiquitin-conjugating enzyme E2 W (151 aa).

Met1 is covalently cross-linked (Peptide (Met-Gly) (interchain with G-Cter in ubiquitin)). The 149-residue stretch at 3–151 folds into the UBC core domain; that stretch reads SMQKRLQKEL…TKWWYHDDTC (149 aa). Cys91 functions as the Glycyl thioester intermediate in the catalytic mechanism.

Belongs to the ubiquitin-conjugating enzyme family. Homodimer. Interacts with FANCL. Interacts with STUB1/CHIP. Ubiquitinated in vitro in the presence of FANCL. Autoubiquitinated at Met-1.

The protein localises to the nucleus. The enzyme catalyses S-ubiquitinyl-[E1 ubiquitin-activating enzyme]-L-cysteine + [E2 ubiquitin-conjugating enzyme]-L-cysteine = [E1 ubiquitin-activating enzyme]-L-cysteine + S-ubiquitinyl-[E2 ubiquitin-conjugating enzyme]-L-cysteine.. The catalysed reaction is S-ubiquitinyl-[E1 ubiquitin-activating enzyme]-L-cysteine + [acceptor protein]-N-terminal-amino acid = [E1 ubiquitin-activating enzyme]-L-cysteine + N-terminal-ubiquitinyl-[acceptor protein].. The protein operates within protein modification; protein ubiquitination. Functionally, accepts ubiquitin from the E1 complex and catalyzes its covalent attachment to other proteins. Specifically monoubiquitinates the N-terminus of various substrates, including ATXN3, MAPT/TAU, POLR2H/RPB8 and STUB1/CHIP, by recognizing backbone atoms of disordered N-termini. Involved in degradation of misfolded chaperone substrates by mediating monoubiquitination of STUB1/CHIP, leading to recruitment of ATXN3 to monoubiquitinated STUB1/CHIP, and restriction of the length of ubiquitin chain attached to STUB1/CHIP substrates by ATXN3. After UV irradiation, but not after mitomycin-C (MMC) treatment, acts as a specific E2 ubiquitin-conjugating enzyme for the Fanconi anemia complex by associating with E3 ubiquitin-protein ligase FANCL and catalyzing monoubiquitination of FANCD2, a key step in the DNA damage pathway. In vitro catalyzes 'Lys-11'-linked polyubiquitination. UBE2W-catalyzed ubiquitination also occurs in the presence of inactive RING/U-box type E3s, i.e. lacking the active site cysteine residues to form thioester bonds with ubiquitin, or even in the absence of E3, albeit at a slower rate. The protein is Ubiquitin-conjugating enzyme E2 W (UBE2W) of Bos taurus (Bovine).